A 782-amino-acid polypeptide reads, in one-letter code: Endonuclease MutS2 (782 aa).

336–343 is a binding site for ATP; that stretch reads GPNTGGKT. Residues 707–782 form the Smr domain; it reads LDLRGYRYED…GFGVTVATLK (76 aa).

Belongs to the DNA mismatch repair MutS family. MutS2 subfamily. Homodimer. Binds to stalled ribosomes, contacting rRNA.

Endonuclease that is involved in the suppression of homologous recombination and thus may have a key role in the control of bacterial genetic diversity. Its function is as follows. Acts as a ribosome collision sensor, splitting the ribosome into its 2 subunits. Detects stalled/collided 70S ribosomes which it binds and splits by an ATP-hydrolysis driven conformational change. Acts upstream of the ribosome quality control system (RQC), a ribosome-associated complex that mediates the extraction of incompletely synthesized nascent chains from stalled ribosomes and their subsequent degradation. Probably generates substrates for RQC. The sequence is that of Endonuclease MutS2 from Staphylococcus aureus (strain COL).